The sequence spans 361 residues: 3-dehydroquinate synthase (361 aa).

NAD(+) is bound by residues 69–74 (DGEEYK), 103–107 (GVIGD), 127–128 (TT), lysine 140, lysine 149, and 167–170 (TLDT). The Zn(2+) site is built by glutamate 182, histidine 245, and histidine 262.

It belongs to the sugar phosphate cyclases superfamily. Dehydroquinate synthase family. The cofactor is Co(2+). Zn(2+) serves as cofactor. Requires NAD(+) as cofactor.

The protein resides in the cytoplasm. The enzyme catalyses 7-phospho-2-dehydro-3-deoxy-D-arabino-heptonate = 3-dehydroquinate + phosphate. It participates in metabolic intermediate biosynthesis; chorismate biosynthesis; chorismate from D-erythrose 4-phosphate and phosphoenolpyruvate: step 2/7. Its function is as follows. Catalyzes the conversion of 3-deoxy-D-arabino-heptulosonate 7-phosphate (DAHP) to dehydroquinate (DHQ). The protein is 3-dehydroquinate synthase of Thioalkalivibrio sulfidiphilus (strain HL-EbGR7).